Here is a 562-residue protein sequence, read N- to C-terminus: Membrane protein insertase YidC (562 aa).

Residues 4-24 form a helical membrane-spanning segment; that stretch reads QRIFLFLALSILGLLLWTSWE. Positions 33–71 are disordered; it reads TEEVVEAEDDVPAPAETPDEAPDPADGETPARDRAEVED. Positions 35-58 are enriched in acidic residues; the sequence is EVVEAEDDVPAPAETPDEAPDPAD. A compositionally biased stretch (basic and acidic residues) spans 61-71; that stretch reads TPARDRAEVED. Transmembrane regions (helical) follow at residues 330-350, 356-376, 426-446, and 499-519; these read MTLSVDYGFLTVLAKPLFWLL, IVGNWGVAIILVTLLIKLAFY, LGGCLPILVQIPVFIALYWVL, and IMMALPIVFTGFFMLFPAGLV.

Belongs to the OXA1/ALB3/YidC family. Type 1 subfamily. As to quaternary structure, interacts with the Sec translocase complex via SecD. Specifically interacts with transmembrane segments of nascent integral membrane proteins during membrane integration.

It localises to the cell inner membrane. Required for the insertion and/or proper folding and/or complex formation of integral membrane proteins into the membrane. Involved in integration of membrane proteins that insert both dependently and independently of the Sec translocase complex, as well as at least some lipoproteins. Aids folding of multispanning membrane proteins. This is Membrane protein insertase YidC from Alkalilimnicola ehrlichii (strain ATCC BAA-1101 / DSM 17681 / MLHE-1).